Reading from the N-terminus, the 495-residue chain is MAQVINTNSLSLLTQNNLNKSQSALGTAIERLSSGLRINSAKDDAAGQAIANRFTANIKGLTQASRNANDGISIAQTTEGALNEINNNLQRVRELAVQSANSTNSQSDLDSIQAEITQRLNEIDRVSGQTQFNGVKVLAQDNTLTIQVGANDGETIDIDLKQINSQTLGLDTLNVQQKYKVSDTAATVTGYADTTIALDNSTFKASATGLGGTDQKIDGDLKFDDTTGKYYAKVTVTGGTGKDGYYEVSVDKTNGEVTLAGGATSPLTGGLPATATEDVKNVQVANADLTEAKAALTAAGVTGTASVVKMSYTDNNGKTIDGGLAVKVGDDYYSATQNKDGSISINTTKYTADDGTSKTALNKLGGADGKTEVVSIGGKTYAASKAEGHNFKAQPDLAEAAATTTENPLQKIDAALAQVDTLRSDLGAVQNRFNSAITNLGNTVNNLTSARSRIEDSDYATEVSNMSRAQILQQAGTSVLAQANQVPQNVLSLLR.

It belongs to the bacterial flagellin family.

The protein localises to the secreted. It is found in the bacterial flagellum. In terms of biological role, flagellin is the subunit protein which polymerizes to form the filaments of bacterial flagella. The chain is Flagellin (fliC) from Salmonella typhimurium (strain LT2 / SGSC1412 / ATCC 700720).